The primary structure comprises 469 residues: Glutamate--tRNA ligase 1 (469 aa).

The short motif at 10–20 (PSPTGYLHVGG) is the 'HIGH' region element. A 'KMSKS' region motif is present at residues 252 to 256 (KLSKR). Lys-255 is a binding site for ATP.

This sequence belongs to the class-I aminoacyl-tRNA synthetase family. Glutamate--tRNA ligase type 1 subfamily. As to quaternary structure, monomer.

It localises to the cytoplasm. It catalyses the reaction tRNA(Glu) + L-glutamate + ATP = L-glutamyl-tRNA(Glu) + AMP + diphosphate. Catalyzes the attachment of glutamate to tRNA(Glu) in a two-step reaction: glutamate is first activated by ATP to form Glu-AMP and then transferred to the acceptor end of tRNA(Glu). This chain is Glutamate--tRNA ligase 1, found in Fervidobacterium nodosum (strain ATCC 35602 / DSM 5306 / Rt17-B1).